Consider the following 159-residue polypeptide: NADH-quinone oxidoreductase subunit B (159 aa).

[4Fe-4S] cluster-binding residues include Cys-32, Cys-33, Cys-97, and Cys-126.

The protein belongs to the complex I 20 kDa subunit family. In terms of assembly, NDH-1 is composed of 14 different subunits. Subunits NuoB, C, D, E, F, and G constitute the peripheral sector of the complex. Requires [4Fe-4S] cluster as cofactor.

The protein localises to the cell inner membrane. The enzyme catalyses a quinone + NADH + 5 H(+)(in) = a quinol + NAD(+) + 4 H(+)(out). In terms of biological role, NDH-1 shuttles electrons from NADH, via FMN and iron-sulfur (Fe-S) centers, to quinones in the respiratory chain. The immediate electron acceptor for the enzyme in this species is believed to be ubiquinone. Couples the redox reaction to proton translocation (for every two electrons transferred, four hydrogen ions are translocated across the cytoplasmic membrane), and thus conserves the redox energy in a proton gradient. The sequence is that of NADH-quinone oxidoreductase subunit B from Helicobacter acinonychis (strain Sheeba).